A 216-amino-acid polypeptide reads, in one-letter code: Cyclic AMP receptor protein (216 aa).

Leu6–Arg126 serves as a coordination point for a nucleoside 3',5'-cyclic phosphate. 3',5'-cyclic AMP-binding positions include Gly75–Ser78 and Arg85–Ser86. Positions Glu140–Ala206 constitute an HTH crp-type domain. The H-T-H motif DNA-binding region spans His166 to His185.

As to quaternary structure, homodimer.

Activates transcription. Positively regulates six promoters upstream of the TTHB186, TTHB147, TTHB178, TTHB159, TTHA0771 and TTHA0176 genes in a cAMP-dependent manner. Regulated genes include clustered regularly interspaced short palindromic repeat (CRISPR) associated (Cas) genes, and the genes encoding a putative transcriptional regulator, a protein containing the exonuclease III-like domain of DNA polymerase, a GCN5-related acetyltransferase homolog, and some T.thermophilus-specific proteins of unknown function. The consensus DNA-binding site of this transcriptional regulator is 5'-(CT)NNG(G/T)(G/T)C(A/C)N(A/T)NNTCACAN(G/C)(G/C)-3' in which N is G, A, T or C. The protein is Cyclic AMP receptor protein of Thermus thermophilus (strain ATCC 27634 / DSM 579 / HB8).